Consider the following 315-residue polypeptide: Ribosomal RNA small subunit methyltransferase H (315 aa).

Residues 33-35 (GGH), D52, F84, D106, and Q113 contribute to the S-adenosyl-L-methionine site.

It belongs to the methyltransferase superfamily. RsmH family.

The protein resides in the cytoplasm. The catalysed reaction is cytidine(1402) in 16S rRNA + S-adenosyl-L-methionine = N(4)-methylcytidine(1402) in 16S rRNA + S-adenosyl-L-homocysteine + H(+). Functionally, specifically methylates the N4 position of cytidine in position 1402 (C1402) of 16S rRNA. The chain is Ribosomal RNA small subunit methyltransferase H from Lactobacillus acidophilus (strain ATCC 700396 / NCK56 / N2 / NCFM).